Reading from the N-terminus, the 159-residue chain is Endoribonuclease YbeY (159 aa).

Zn(2+) contacts are provided by His125, His129, and His135.

This sequence belongs to the endoribonuclease YbeY family. Zn(2+) is required as a cofactor.

It localises to the cytoplasm. Its function is as follows. Single strand-specific metallo-endoribonuclease involved in late-stage 70S ribosome quality control and in maturation of the 3' terminus of the 16S rRNA. This chain is Endoribonuclease YbeY, found in Limosilactobacillus reuteri (strain DSM 20016) (Lactobacillus reuteri).